The chain runs to 83 residues: MKASMYLALAGLVLLFVVGYASESEEKEFPRELLSKIFAVDDFKGEERGCKGFGDSCTPGKNECCPNYACSSKHKWCKVYLGK.

The first 21 residues, 1-21 (MKASMYLALAGLVLLFVVGYA), serve as a signal peptide directing secretion. A propeptide spanning residues 22–48 (SESEEKEFPRELLSKIFAVDDFKGEER) is cleaved from the precursor. 3 disulfides stabilise this stretch: Cys50/Cys65, Cys57/Cys70, and Cys64/Cys77. The residue at position 81 (Leu81) is a Leucine amide.

The protein belongs to the neurotoxin 10 (Hwtx-1) family. 15 (Hntx-3) subfamily. Monomer. As to expression, expressed by the venom gland.

It is found in the secreted. Its function is as follows. Selective antagonist of neuronal tetrodotoxin (TTX)-sensitive voltage-gated sodium channels (IC(50)=1270 nM on Nav1.1/SCN1A, 270 nM on Nav1.2/SCN2A, 491 nM on Nav1.3/SCN3A and 232 nM on Nav1.7/SCN9A). This toxin suppress Nav1.7 current amplitude without significantly altering the activation, inactivation, and repriming kinetics. Short extreme depolarizations partially activate the toxin-bound channel, indicating voltage-dependent inhibition of this toxin. This toxin increases the deactivation of the Nav1.7 current after extreme depolarizations. The toxin-Nav1.7 complex is gradually dissociated upon prolonged strong depolarizations in a voltage-dependent manner, and the unbound toxin rebinds to Nav1.7 after a long repolarization. Moreover, analysis of chimeric channels showed that the DIIS3-S4 linker is critical for toxin binding to Nav1.7. These data are consistent with this toxin interacting with Nav1.7 site 4 and trapping the domain II voltage sensor in the closed state. This is Hainantoxin-III 2 from Cyriopagopus hainanus (Chinese bird spider).